Reading from the N-terminus, the 66-residue chain is Cadmium-metallothionein (66 aa).

N-acetylserine is present on serine 1. Residues cysteine 9, cysteine 13, cysteine 18, cysteine 20, cysteine 24, cysteine 26, cysteine 30, cysteine 32, cysteine 35, cysteine 38, cysteine 40, cysteine 45, cysteine 47, cysteine 51, cysteine 57, cysteine 59, cysteine 63, and cysteine 65 each coordinate Cd(2+).

It belongs to the metallothionein superfamily. Type 2 family.

In terms of biological role, the metallothioneins are involved in the cellular sequestration of toxic metal ions and regulation of essential trace elements. Binds almost exclusively cadmium. This chain is Cadmium-metallothionein, found in Helix pomatia (Roman snail).